A 241-amino-acid polypeptide reads, in one-letter code: Small ribosomal subunit protein uS2 (241 aa).

The protein belongs to the universal ribosomal protein uS2 family.

This chain is Small ribosomal subunit protein uS2, found in Klebsiella pneumoniae subsp. pneumoniae (strain ATCC 700721 / MGH 78578).